The following is a 171-amino-acid chain: UPF0763 protein KHP_0657 (171 aa).

The protein belongs to the UPF0763 family.

This chain is UPF0763 protein KHP_0657, found in Helicobacter pylori (strain 51).